The chain runs to 398 residues: 2,3,4,5-tetrahydropyridine-2,6-dicarboxylate N-succinyltransferase (398 aa).

Catalysis depends on E268, which acts as the Acyl-anhydride intermediate. Residues R270, G285, S288, A311, 326–327 (DG), G334, K361, and 374–377 (RQNS) contribute to the succinyl-CoA site.

Belongs to the type 2 tetrahydrodipicolinate N-succinyltransferase family. In terms of assembly, homotrimer.

It is found in the cytoplasm. It catalyses the reaction (S)-2,3,4,5-tetrahydrodipicolinate + succinyl-CoA + H2O = (S)-2-succinylamino-6-oxoheptanedioate + CoA. It participates in amino-acid biosynthesis; L-lysine biosynthesis via DAP pathway; LL-2,6-diaminopimelate from (S)-tetrahydrodipicolinate (succinylase route): step 1/3. Functionally, catalyzes the conversion of the cyclic tetrahydrodipicolinate (THDP) into the acyclic N-succinyl-L-2-amino-6-oxopimelate using succinyl-CoA. This is 2,3,4,5-tetrahydropyridine-2,6-dicarboxylate N-succinyltransferase from Sulfurimonas denitrificans (strain ATCC 33889 / DSM 1251) (Thiomicrospira denitrificans (strain ATCC 33889 / DSM 1251)).